The following is an 88-amino-acid chain: Insertion element ISR1 uncharacterized 10 kDa protein A3 (88 aa).

The protein belongs to the transposase 8 family.

The sequence is that of Insertion element ISR1 uncharacterized 10 kDa protein A3 from Rhizobium sp.